Reading from the N-terminus, the 223-residue chain is Transcriptional regulatory protein PhoP (223 aa).

Positions 2 to 116 (RVLVVEDNAL…EVMARMQALM (115 aa)) constitute a Response regulatory domain. 4-aspartylphosphate is present on Asp-51. Positions 124-222 (SQVISLPPFQ…VRGQGYLFEL (99 aa)) form a DNA-binding region, ompR/PhoB-type.

As to quaternary structure, monomer in the inactive, unphosphorylated state and dimer in the active, phosphorylated state. In terms of processing, phosphorylated by PhoQ.

It localises to the cytoplasm. Its activity is regulated as follows. Feedback inhibited by MgrB, which seems to bind PhoQ, altering its activity and that of downstream effector PhoP. PhoP-regulated transcription is redox-sensitive, being activated when the periplasm becomes more reducing (deletion of dsbA/dsbB, or treatment with dithiothreitol). MgrB acts between DsbA/DsbB and PhoP/PhoQ in this pathway. Functionally, member of the two-component regulatory system PhoP/PhoQ involved in adaptation to low Mg(2+) environments and the control of acid resistance genes. In low periplasmic Mg(2+), PhoQ phosphorylates PhoP, resulting in the expression of PhoP-activated genes (PAG) and repression of PhoP-repressed genes (PRG). In high periplasmic Mg(2+), PhoQ dephosphorylates phospho-PhoP, resulting in the repression of PAG and may lead to expression of some PRG. Mediates magnesium influx to the cytosol by activation of MgtA. Promotes expression of the two-component regulatory system rstA/rstB and transcription of the hemL, mgrB, nagA, slyB, vboR and yrbL genes. The protein is Transcriptional regulatory protein PhoP (phoP) of Escherichia coli (strain K12).